The chain runs to 393 residues: Cytotoxic and regulatory T-cell molecule (393 aa).

Residues 1-16 (MWWGALSLLFWVPVQA) form the signal peptide. Residues 17 to 111 (AFLKMETVTV…SVKTKQVRVT (95 aa)) enclose the Ig-like V-type domain. The Extracellular portion of the chain corresponds to 17–289 (AFLKMETVTV…HTGLARRKSG (273 aa)). Intrachain disulfides connect cysteine 36/cysteine 96 and cysteine 139/cysteine 194. N-linked (GlcNAc...) asparagine glycans are attached at residues asparagine 85 and asparagine 176. Positions 119–208 (PTVEALVLRR…EGLHGRKLVA (90 aa)) constitute an Ig-like C2-type domain. A compositionally biased stretch (acidic residues) spans 218 to 228 (DQETSDQETSD). The segment at 218–280 (DQETSDQETS…GLSTEASAQH (63 aa)) is disordered. Residues 229-246 (APEQSSLSSQALQQPTST) show a composition bias toward low complexity. The span at 247–256 (VSMMENSSIP) shows a compositional bias: polar residues. The segment covering 257 to 267 (ETDKEEKEHAT) has biased composition (basic and acidic residues). Residues 270 to 280 (PGLSTEASAQH) show a composition bias toward polar residues. The chain crosses the membrane as a helical span at residues 290-310 (ILLLTLVSFLIFILFIIVQLF). Residues 311–393 (IMKLRKAHVV…KHSRVPESIV (83 aa)) are Cytoplasmic-facing. Positions 333 to 356 (ESYRSRSNNEETSSQENSSQAPQS) are disordered. Over residues 342 to 352 (EETSSQENSSQ) the composition is skewed to low complexity. Positions 390 to 393 (ESIV) match the PDZ-binding motif.

It belongs to the nectin family. Monomer. May form homodimer (via Ig-like V-type domain). Interacts (via Ig-like V-type domain) with CADM1 (via Ig-like V-type domain); the interaction competes with CRTAM homodimerization and CADM1 homodimerization. Interacts (via PDZ-binding motif) with SCRIB (via PDZ domain 3); the interaction promotes CRTAM and SCRIB polarization in a subset of CD4+ T-cells. In terms of tissue distribution, in the immune system, expression is restricted to activated class-I MHC-restricted cells, including NKT, NK and CD8+ T-cells (at protein level). Transiently expressed in activated CD8+ T-cells and a subset of activated CD4+ T-cells (at protein level). Expressed in activated intestinal T-cells, specifically intraepithelial CD4+ CD8+ T-cells, intraepithelial CD4+ T-cells and, CD8+ T-cells in the intestine epithelium, lamina propria, Peyer's Patches and mesenteric lymph nodes. Also expressed in spleen, brain and testis.

The protein localises to the cell membrane. Its function is as follows. Mediates heterophilic cell-cell adhesion which regulates the activation, differentiation and tissue retention of various T-cell subsets. Interaction with CADM1 promotes natural killer (NK) cell cytotoxicity and IFNG/interferon-gamma secretion by CD8+ T-cells in vitro as well as NK cell-mediated rejection of tumors expressing CADM1 in vivo. Regulates CD8+ T-cell proliferation in response to T-cell receptor (TCR) activation. Appears to be dispensable for CD8+ T-cell-mediated cytotoxicity. Interaction with SCRIB promotes the late phase of cellular polarization of a subset of CD4+ T-cells, which in turn regulates TCR-mediated proliferation and IFNG, IL17 and IL22 production. By interacting with CADM1 on CD8+ dendritic cells, regulates the retention of activated CD8+ T-cells within the draining lymph node. Required for the intestinal retention of intraepithelial CD4+ CD8+ T-cells and, to a lesser extent, intraepithelial and lamina propria CD8+ T-cells and CD4+ T-cells. Interaction with CADM1 promotes the adhesion to gut-associated CD103+ dendritic cells, which may facilitate the expression of gut-homing and adhesion molecules on T-cells and the conversion of CD4+ T-cells into CD4+ CD8+ T-cells. This chain is Cytotoxic and regulatory T-cell molecule, found in Mus musculus (Mouse).